Reading from the N-terminus, the 203-residue chain is NAD(P)H dehydrogenase (quinone) (203 aa).

The Flavodoxin-like domain occupies 7 to 194 (VLVLYHSSYG…SLARKQGAHV (188 aa)). Residues 13–18 (SSYGHI) and 82–84 (TRF) each bind FMN. Tyr15 contacts NAD(+). Trp102 serves as a coordination point for substrate. FMN contacts are provided by residues 117–122 (STGTGG) and His137.

It belongs to the WrbA family. FMN serves as cofactor.

It catalyses the reaction a quinone + NADH + H(+) = a quinol + NAD(+). The catalysed reaction is a quinone + NADPH + H(+) = a quinol + NADP(+). The sequence is that of NAD(P)H dehydrogenase (quinone) from Parvibaculum lavamentivorans (strain DS-1 / DSM 13023 / NCIMB 13966).